A 361-amino-acid chain; its full sequence is Phosphoserine aminotransferase (361 aa).

R42 serves as a coordination point for L-glutamate. Pyridoxal 5'-phosphate is bound by residues A76 to T77, W102, T152, D172, and Q195. K196 is subject to N6-(pyridoxal phosphate)lysine. Residue N237 to T238 participates in pyridoxal 5'-phosphate binding.

Belongs to the class-V pyridoxal-phosphate-dependent aminotransferase family. SerC subfamily. As to quaternary structure, homodimer. The cofactor is pyridoxal 5'-phosphate.

It localises to the cytoplasm. It catalyses the reaction O-phospho-L-serine + 2-oxoglutarate = 3-phosphooxypyruvate + L-glutamate. The catalysed reaction is 4-(phosphooxy)-L-threonine + 2-oxoglutarate = (R)-3-hydroxy-2-oxo-4-phosphooxybutanoate + L-glutamate. The protein operates within amino-acid biosynthesis; L-serine biosynthesis; L-serine from 3-phospho-D-glycerate: step 2/3. It participates in cofactor biosynthesis; pyridoxine 5'-phosphate biosynthesis; pyridoxine 5'-phosphate from D-erythrose 4-phosphate: step 3/5. Catalyzes the reversible conversion of 3-phosphohydroxypyruvate to phosphoserine and of 3-hydroxy-2-oxo-4-phosphonooxybutanoate to phosphohydroxythreonine. The polypeptide is Phosphoserine aminotransferase (Xanthomonas axonopodis pv. citri (strain 306)).